Here is a 448-residue protein sequence, read N- to C-terminus: Chromosomal replication initiator protein DnaA 1 (448 aa).

The domain I, interacts with DnaA modulators stretch occupies residues 1-76 (MLTSETQNVW…FLPVDMSGEP (76 aa)). Residues 76 to 111 (PAIRFIIAPPQKKIIPPNHFSISSSQKEEQSPNSDV) form a domain II region. The interval 112–328 (KLNNNYRFEN…GAINRLSAHC (217 aa)) is domain III, AAA+ region. Positions 156, 158, 159, and 160 each coordinate ATP. Residues 329–448 (RLLDLNITEE…IGMVRRNIES (120 aa)) are domain IV, binds dsDNA.

This sequence belongs to the DnaA family. Oligomerizes as a right-handed, spiral filament on DNA at oriC.

The protein resides in the cytoplasm. Functionally, plays an essential role in the initiation and regulation of chromosomal replication. ATP-DnaA binds to the origin of replication (oriC) to initiate formation of the DNA replication initiation complex once per cell cycle. Binds the DnaA box (a 9 base pair repeat at the origin) and separates the double-stranded (ds)DNA. Forms a right-handed helical filament on oriC DNA; dsDNA binds to the exterior of the filament while single-stranded (ss)DNA is stabiized in the filament's interior. The ATP-DnaA-oriC complex binds and stabilizes one strand of the AT-rich DNA unwinding element (DUE), permitting loading of DNA polymerase. After initiation quickly degrades to an ADP-DnaA complex that is not apt for DNA replication. Binds acidic phospholipids. This chain is Chromosomal replication initiator protein DnaA 1, found in Protochlamydia amoebophila (strain UWE25).